Consider the following 325-residue polypeptide: Ribosomal RNA small subunit methyltransferase H (325 aa).

S-adenosyl-L-methionine is bound by residues 32–34 (GGH), Asp-52, Phe-79, Asp-100, and Gln-107.

The protein belongs to the methyltransferase superfamily. RsmH family.

Its subcellular location is the cytoplasm. The enzyme catalyses cytidine(1402) in 16S rRNA + S-adenosyl-L-methionine = N(4)-methylcytidine(1402) in 16S rRNA + S-adenosyl-L-homocysteine + H(+). Functionally, specifically methylates the N4 position of cytidine in position 1402 (C1402) of 16S rRNA. This chain is Ribosomal RNA small subunit methyltransferase H, found in Oceanobacillus iheyensis (strain DSM 14371 / CIP 107618 / JCM 11309 / KCTC 3954 / HTE831).